We begin with the raw amino-acid sequence, 643 residues long: Threonine--tRNA ligase (643 aa).

The TGS domain occupies 3-64 (DVVKITFPDG…EEDGAISIIT (62 aa)). Residues 245 to 542 (DHRKLGKELD…LIEEYKGAFP (298 aa)) form a catalytic region. Zn(2+) is bound by residues Cys338, His389, and His519.

Belongs to the class-II aminoacyl-tRNA synthetase family. Homodimer. Zn(2+) serves as cofactor.

It localises to the cytoplasm. The enzyme catalyses tRNA(Thr) + L-threonine + ATP = L-threonyl-tRNA(Thr) + AMP + diphosphate + H(+). Its function is as follows. Catalyzes the attachment of threonine to tRNA(Thr) in a two-step reaction: L-threonine is first activated by ATP to form Thr-AMP and then transferred to the acceptor end of tRNA(Thr). Also edits incorrectly charged L-seryl-tRNA(Thr). The polypeptide is Threonine--tRNA ligase (Anoxybacillus flavithermus (strain DSM 21510 / WK1)).